We begin with the raw amino-acid sequence, 410 residues long: Arginine deiminase (410 aa).

Residue Cys-400 is the Amidino-cysteine intermediate of the active site.

It belongs to the arginine deiminase family.

Its subcellular location is the cytoplasm. It catalyses the reaction L-arginine + H2O = L-citrulline + NH4(+). It participates in amino-acid degradation; L-arginine degradation via ADI pathway; carbamoyl phosphate from L-arginine: step 1/2. The chain is Arginine deiminase from Bacillus cereus (strain ATCC 10987 / NRS 248).